The sequence spans 348 residues: Dihydroorotase (348 aa).

Residues histidine 14 and histidine 16 each contribute to the Zn(2+) site. Residues 16–18 and asparagine 42 each bind substrate; that span reads HLR. Residues lysine 100, histidine 137, and histidine 175 each contribute to the Zn(2+) site. N6-carboxylysine is present on lysine 100. Substrate is bound at residue histidine 137. Leucine 220 is a binding site for substrate. Zn(2+) is bound at residue aspartate 248. Residue aspartate 248 is part of the active site. Residues histidine 252 and alanine 264 each coordinate substrate.

It belongs to the metallo-dependent hydrolases superfamily. DHOase family. Class II DHOase subfamily. In terms of assembly, homodimer. Zn(2+) serves as cofactor.

The catalysed reaction is (S)-dihydroorotate + H2O = N-carbamoyl-L-aspartate + H(+). It functions in the pathway pyrimidine metabolism; UMP biosynthesis via de novo pathway; (S)-dihydroorotate from bicarbonate: step 3/3. Its function is as follows. Catalyzes the reversible cyclization of carbamoyl aspartate to dihydroorotate. The sequence is that of Dihydroorotase from Pseudomonas fluorescens (strain ATCC BAA-477 / NRRL B-23932 / Pf-5).